The following is a 160-amino-acid chain: Non-secretory ribonuclease (160 aa).

A signal peptide spans 1-27 (MVPKLFTSPICLLLLLGLMGVEGSLHA). C-linked (Man) tryptophan glycosylation occurs at Trp34. The active-site Proton acceptor is His42. Residue Asn44 is glycosylated (N-linked (GlcNAc...) asparagine). 4 disulfide bridges follow: Cys50–Cys110, Cys64–Cys122, Cys82–Cys137, and Cys89–Cys98. Tyr60 bears the 3'-nitrotyrosine mark. 65–69 (KNQNT) is a binding site for substrate. Residues Asn92, Asn111, Asn118, and Asn138 are each glycosylated (N-linked (GlcNAc...) asparagine). His155 (proton donor) is an active-site residue.

This sequence belongs to the pancreatic ribonuclease family. As to quaternary structure, interacts with and forms a tight 1:1 complex with RNH1. Dimerization of two such complexes may occur.

It is found in the lysosome. Its subcellular location is the cytoplasmic granule. The catalysed reaction is an [RNA] containing cytidine + H2O = an [RNA]-3'-cytidine-3'-phosphate + a 5'-hydroxy-ribonucleotide-3'-[RNA].. It carries out the reaction an [RNA] containing uridine + H2O = an [RNA]-3'-uridine-3'-phosphate + a 5'-hydroxy-ribonucleotide-3'-[RNA].. This is a non-secretory ribonuclease. It is a pyrimidine specific nuclease with a slight preference for U. Cytotoxin and helminthotoxin. Possesses a wide variety of biological activities. This chain is Non-secretory ribonuclease (RNASE2), found in Chlorocebus aethiops (Green monkey).